Consider the following 238-residue polypeptide: tRNA1(Val) (adenine(37)-N6)-methyltransferase (238 aa).

Belongs to the methyltransferase superfamily. tRNA (adenine-N(6)-)-methyltransferase family.

Its subcellular location is the cytoplasm. The catalysed reaction is adenosine(37) in tRNA1(Val) + S-adenosyl-L-methionine = N(6)-methyladenosine(37) in tRNA1(Val) + S-adenosyl-L-homocysteine + H(+). In terms of biological role, specifically methylates the adenine in position 37 of tRNA(1)(Val) (anticodon cmo5UAC). The chain is tRNA1(Val) (adenine(37)-N6)-methyltransferase from Cytophaga hutchinsonii (strain ATCC 33406 / DSM 1761 / CIP 103989 / NBRC 15051 / NCIMB 9469 / D465).